The following is a 119-amino-acid chain: Large ribosomal subunit protein uL18 (119 aa).

The interval 1 to 25 is disordered; it reads MITKIDKNKVRKKRHARVRSKISGT. Over residues 9–20 the composition is skewed to basic residues; it reads KVRKKRHARVRS.

The protein belongs to the universal ribosomal protein uL18 family. Part of the 50S ribosomal subunit; part of the 5S rRNA/L5/L18/L25 subcomplex. Contacts the 5S and 23S rRNAs.

Its function is as follows. This is one of the proteins that bind and probably mediate the attachment of the 5S RNA into the large ribosomal subunit, where it forms part of the central protuberance. This is Large ribosomal subunit protein uL18 from Listeria innocua serovar 6a (strain ATCC BAA-680 / CLIP 11262).